The primary structure comprises 99 residues: Carboxysome shell vertex protein CcmL (99 aa).

The BMV domain occupies 1–83 (MRIAKVRGTV…VDAAVIAIID (83 aa)).

It belongs to the CcmL/EutN family. CcmL subfamily. Homopentamer. Interacts with full-length CcmM.

The protein localises to the carboxysome. Probably forms vertices in the carboxysome, a polyhedral inclusion where RuBisCO (ribulose bisphosphate carboxylase, rbcL-rbcS) is sequestered. Has been modeled to induce curvature upon insertion into an otherwise flat hexagonal molecular layer of CcmK subunits. In terms of biological role, beta-carboxysome assembly initiates when soluble RuBisCO is condensed into a liquid matrix in a pre-carboxysome by the RbcS-like domains of probably both CcmM58 and CcmM35. CcmN interacts with the N-terminus of CcmM58, and then recruits the CcmK2 major shell protein via CcmN's encapsulation peptide. Shell formation requires CcmK proteins and CcmO. CcmL caps the otherwise elongated carboxysome. Once fully encapsulated carboxysomes are formed, they migrate within the cell probably via interactions with the cytoskeleton. This chain is Carboxysome shell vertex protein CcmL, found in Synechococcus elongatus (strain ATCC 33912 / PCC 7942 / FACHB-805) (Anacystis nidulans R2).